The sequence spans 408 residues: 8-amino-7-oxononanoate synthase (408 aa).

R20 contacts substrate. 117–118 (GY) contacts pyridoxal 5'-phosphate. H142 is a substrate binding site. Pyridoxal 5'-phosphate contacts are provided by S188, H216, and T244. Position 247 is an N6-(pyridoxal phosphate)lysine (K247). A substrate-binding site is contributed by T367.

The protein belongs to the class-II pyridoxal-phosphate-dependent aminotransferase family. BioF subfamily. Homodimer. Requires pyridoxal 5'-phosphate as cofactor.

It carries out the reaction 6-carboxyhexanoyl-[ACP] + L-alanine + H(+) = (8S)-8-amino-7-oxononanoate + holo-[ACP] + CO2. The protein operates within cofactor biosynthesis; biotin biosynthesis. Its function is as follows. Catalyzes the decarboxylative condensation of pimeloyl-[acyl-carrier protein] and L-alanine to produce 8-amino-7-oxononanoate (AON), [acyl-carrier protein], and carbon dioxide. The polypeptide is 8-amino-7-oxononanoate synthase (Cupriavidus pinatubonensis (strain JMP 134 / LMG 1197) (Cupriavidus necator (strain JMP 134))).